Reading from the N-terminus, the 679-residue chain is Glycine--tRNA ligase beta subunit (679 aa).

This sequence belongs to the class-II aminoacyl-tRNA synthetase family. As to quaternary structure, tetramer of two alpha and two beta subunits.

The protein resides in the cytoplasm. It carries out the reaction tRNA(Gly) + glycine + ATP = glycyl-tRNA(Gly) + AMP + diphosphate. This chain is Glycine--tRNA ligase beta subunit, found in Streptococcus uberis (strain ATCC BAA-854 / 0140J).